A 126-amino-acid polypeptide reads, in one-letter code: Holo-[acyl-carrier-protein] synthase (126 aa).

2 residues coordinate Mg(2+): Asp-9 and Glu-58.

The protein belongs to the P-Pant transferase superfamily. AcpS family. Mg(2+) serves as cofactor.

The protein resides in the cytoplasm. It catalyses the reaction apo-[ACP] + CoA = holo-[ACP] + adenosine 3',5'-bisphosphate + H(+). Its function is as follows. Transfers the 4'-phosphopantetheine moiety from coenzyme A to a Ser of acyl-carrier-protein. The polypeptide is Holo-[acyl-carrier-protein] synthase (Buchnera aphidicola subsp. Acyrthosiphon pisum (strain APS) (Acyrthosiphon pisum symbiotic bacterium)).